The following is an 89-amino-acid chain: Small ribosomal subunit protein uS15 (89 aa).

It belongs to the universal ribosomal protein uS15 family. Part of the 30S ribosomal subunit. Forms a bridge to the 50S subunit in the 70S ribosome, contacting the 23S rRNA.

In terms of biological role, one of the primary rRNA binding proteins, it binds directly to 16S rRNA where it helps nucleate assembly of the platform of the 30S subunit by binding and bridging several RNA helices of the 16S rRNA. Forms an intersubunit bridge (bridge B4) with the 23S rRNA of the 50S subunit in the ribosome. The polypeptide is Small ribosomal subunit protein uS15 (Gluconacetobacter diazotrophicus (strain ATCC 49037 / DSM 5601 / CCUG 37298 / CIP 103539 / LMG 7603 / PAl5)).